The chain runs to 100 residues: Aspartyl/glutamyl-tRNA(Asn/Gln) amidotransferase subunit C (100 aa).

The protein belongs to the GatC family. In terms of assembly, heterotrimer of A, B and C subunits.

It catalyses the reaction L-glutamyl-tRNA(Gln) + L-glutamine + ATP + H2O = L-glutaminyl-tRNA(Gln) + L-glutamate + ADP + phosphate + H(+). The enzyme catalyses L-aspartyl-tRNA(Asn) + L-glutamine + ATP + H2O = L-asparaginyl-tRNA(Asn) + L-glutamate + ADP + phosphate + 2 H(+). Its function is as follows. Allows the formation of correctly charged Asn-tRNA(Asn) or Gln-tRNA(Gln) through the transamidation of misacylated Asp-tRNA(Asn) or Glu-tRNA(Gln) in organisms which lack either or both of asparaginyl-tRNA or glutaminyl-tRNA synthetases. The reaction takes place in the presence of glutamine and ATP through an activated phospho-Asp-tRNA(Asn) or phospho-Glu-tRNA(Gln). This chain is Aspartyl/glutamyl-tRNA(Asn/Gln) amidotransferase subunit C, found in Rickettsia africae (strain ESF-5).